The sequence spans 472 residues: Argininosuccinate lyase (472 aa).

Belongs to the lyase 1 family. Argininosuccinate lyase subfamily.

The protein resides in the cytoplasm. The catalysed reaction is 2-(N(omega)-L-arginino)succinate = fumarate + L-arginine. It functions in the pathway amino-acid biosynthesis; L-arginine biosynthesis; L-arginine from L-ornithine and carbamoyl phosphate: step 3/3. This chain is Argininosuccinate lyase, found in Maricaulis maris (strain MCS10) (Caulobacter maris).